A 216-amino-acid polypeptide reads, in one-letter code: Large ribosomal subunit protein uL3 (216 aa).

The interval 134-153 (RATHGNSRSHNVPGSIGMAQ) is disordered. Gln-153 bears the N5-methylglutamine mark.

Belongs to the universal ribosomal protein uL3 family. Part of the 50S ribosomal subunit. Forms a cluster with proteins L14 and L19. In terms of processing, methylated by PrmB.

Functionally, one of the primary rRNA binding proteins, it binds directly near the 3'-end of the 23S rRNA, where it nucleates assembly of the 50S subunit. This is Large ribosomal subunit protein uL3 from Cupriavidus taiwanensis (strain DSM 17343 / BCRC 17206 / CCUG 44338 / CIP 107171 / LMG 19424 / R1) (Ralstonia taiwanensis (strain LMG 19424)).